Reading from the N-terminus, the 475-residue chain is U3 small nucleolar RNA-interacting protein 2 (475 aa).

The disordered stretch occupies residues 1 to 75 (MSATAAARKR…EEEEELEETA (75 aa)). Residues 8–40 (RKRGKPASGAGAGAGAGKRRRKADSAGDRGKSK) carry the Nuclear localization signal motif. The residue at position 10 (Arg10) is an Omega-N-methylarginine. Lys12 and Lys25 each carry N6-acetyllysine. 4 positions are modified to phosphoserine: Ser50, Ser51, Ser53, and Ser57. Residues 65–74 (EEEEEELEET) are compositionally biased toward acidic residues. Lys113 participates in a covalent cross-link: Glycyl lysine isopeptide (Lys-Gly) (interchain with G-Cter in SUMO2). 7 WD repeats span residues 144 to 183 (GHQL…KLHV), 197 to 236 (GHSS…HLYT), 239 to 278 (GHRD…YVET), 281 to 320 (GHQD…QLVF), 322 to 360 (GHQG…PLAL), 374 to 413 (EQPF…RQLD), and 419 to 460 (PLVG…NSVC).

This sequence belongs to the WD repeat RRP9 family. Interacts specifically with the U3 small nucleolar RNA (U3 snoRNA). Binds a sub-fragment of the U3 snoRNA surrounding the B/C motif (3UBC). This association with the U3BC RNA is dependent on the binding of a protein called 15.5K to the box B/C motif. The association of the protein with the U3BC RNA was found to be also dependent on a conserved RNA structure that flanks the box B/C motif. Part of the small subunit (SSU) processome, composed of more than 70 proteins and the RNA chaperone small nucleolar RNA (snoRNA) U3. In terms of processing, acetylation at Lys-12 and Lys-25 by KAT2B/PCAF under stress impairs pre-rRNA processing. Deacetylation by SIRT7 enhances RRP9-binding to U3 snoRNA, which is a prerequisite for pre-rRNA processing.

Its subcellular location is the nucleus. The protein localises to the nucleolus. Its function is as follows. Component of a nucleolar small nuclear ribonucleoprotein particle (snoRNP) thought to participate in the processing and modification of pre-ribosomal RNA (pre-rRNA). Part of the small subunit (SSU) processome, first precursor of the small eukaryotic ribosomal subunit. During the assembly of the SSU processome in the nucleolus, many ribosome biogenesis factors, an RNA chaperone and ribosomal proteins associate with the nascent pre-rRNA and work in concert to generate RNA folding, modifications, rearrangements and cleavage as well as targeted degradation of pre-ribosomal RNA by the RNA exosome. This is U3 small nucleolar RNA-interacting protein 2 from Homo sapiens (Human).